Consider the following 412-residue polypeptide: Multifunctional CCA protein (412 aa).

Glycine 8 and arginine 11 together coordinate ATP. Glycine 8 and arginine 11 together coordinate CTP. Mg(2+) contacts are provided by glutamate 21 and aspartate 23. ATP-binding residues include arginine 91, arginine 137, and arginine 140. CTP-binding residues include arginine 91, arginine 137, and arginine 140. The 102-residue stretch at 228–329 (CGIHTLMSLQ…WRLLQRLDVL (102 aa)) folds into the HD domain.

The protein belongs to the tRNA nucleotidyltransferase/poly(A) polymerase family. Bacterial CCA-adding enzyme type 1 subfamily. As to quaternary structure, monomer. Can also form homodimers and oligomers. The cofactor is Mg(2+). Ni(2+) is required as a cofactor.

The catalysed reaction is a tRNA precursor + 2 CTP + ATP = a tRNA with a 3' CCA end + 3 diphosphate. It catalyses the reaction a tRNA with a 3' CCA end + 2 CTP + ATP = a tRNA with a 3' CCACCA end + 3 diphosphate. Catalyzes the addition and repair of the essential 3'-terminal CCA sequence in tRNAs without using a nucleic acid template. Adds these three nucleotides in the order of C, C, and A to the tRNA nucleotide-73, using CTP and ATP as substrates and producing inorganic pyrophosphate. tRNA 3'-terminal CCA addition is required both for tRNA processing and repair. Also involved in tRNA surveillance by mediating tandem CCA addition to generate a CCACCA at the 3' terminus of unstable tRNAs. While stable tRNAs receive only 3'-terminal CCA, unstable tRNAs are marked with CCACCA and rapidly degraded. The polypeptide is Multifunctional CCA protein (Acinetobacter baumannii (strain AB307-0294)).